Reading from the N-terminus, the 75-residue chain is Cruzioseptin-6 (75 aa).

The signal sequence occupies residues 1-22 (MAYLKKSLFLVLFLGLVSLSIC). Residues 23 to 43 (EEEKREEENEEEQEDDDQSEE) constitute a propeptide that is removed on maturation. Residues 24-44 (EEKREEENEEEQEDDDQSEEK) are disordered. The segment covering 30–41 (ENEEEQEDDDQS) has biased composition (acidic residues).

As to expression, expressed by the skin glands.

It localises to the secreted. In terms of biological role, has antimicrobial activity. This chain is Cruzioseptin-6, found in Cruziohyla calcarifer (Splendid leaf frog).